Consider the following 237-residue polypeptide: Uridylate kinase (237 aa).

Residue 12–15 coordinates ATP; the sequence is KLSG. The tract at residues 20 to 25 is involved in allosteric activation by GTP; sequence GEDGLG. Residue Gly54 participates in UMP binding. The ATP site is built by Gly55 and Arg59. Residues Asp74 and 135–142 each bind UMP; that span reads TGNPFFTT. Positions 162, 168, and 171 each coordinate ATP.

This sequence belongs to the UMP kinase family. In terms of assembly, homohexamer.

The protein resides in the cytoplasm. The catalysed reaction is UMP + ATP = UDP + ADP. It participates in pyrimidine metabolism; CTP biosynthesis via de novo pathway; UDP from UMP (UMPK route): step 1/1. Allosterically activated by GTP. Inhibited by UTP. Catalyzes the reversible phosphorylation of UMP to UDP. This chain is Uridylate kinase, found in Haemophilus influenzae (strain 86-028NP).